Here is a 567-residue protein sequence, read N- to C-terminus: Nucleolus and neural progenitor protein (567 aa).

At Ser-265 the chain carries Phosphoserine. A disordered region spans residues 437-457 (SKHHLRQRRSQNKFLRRQRKP). The nuclear localization signal stretch occupies residues 442–460 (RQRRSQNKFLRRQRKPQRK).

It belongs to the nepro family.

It is found in the nucleus. The protein localises to the nucleolus. Its function is as follows. May play a role in cortex development as part of the Notch signaling pathway. Downstream of Notch may repress the expression of proneural genes and inhibit neuronal differentiation thereby maintaining neural progenitors. May also play a role in preimplentation embryo development. The polypeptide is Nucleolus and neural progenitor protein (Homo sapiens (Human)).